The sequence spans 288 residues: MSYQPQTEAATSRFLNVEEAGKTLRIHFNDCGQGDETVVLLHGSGPGATGWANFSRNIDPLVEAGYRVILLDCPGWGKSDSVVNSGSRSDLNARILKSVVDQLDIAKIHLLGNSMGGHSSVAFTLKWPERVGKLVLMGGGTGGMSLFTPMPTEGIKRLNQLYRQPTIENLKLMMDIFVFDTSDLTDALFEARLNNMLSRRDHLENFVKSLEANPKQFPDFGPRLAEIKAQTLIVWGRNDRFVPMDAGLRLLSGIAGSELHIFRDCGHWAQWEHADAFNQLVLNFLARP.

H267 acts as the Proton acceptor in catalysis.

Belongs to the AB hydrolase superfamily. MhpC family. As to quaternary structure, homodimer.

The catalysed reaction is (2Z,4E)-2-hydroxy-6-oxonona-2,4-dienedioate + H2O = (2Z)-2-hydroxypenta-2,4-dienoate + succinate + H(+). It carries out the reaction (2Z,4E,7E)-2-hydroxy-6-oxonona-2,4,7-trienedioate + H2O = (2Z)-2-hydroxypenta-2,4-dienoate + fumarate + H(+). Its pathway is aromatic compound metabolism; 3-phenylpropanoate degradation. Its function is as follows. Catalyzes the cleavage of the C5-C6 bond of 2-hydroxy-6-oxononadienedioate and 2-hydroxy-6-oxononatrienedioate, a dienol ring fission product of the bacterial meta-cleavage pathway for degradation of phenylpropionic acid. In Escherichia coli (strain K12 / DH10B), this protein is 2-hydroxy-6-oxononadienedioate/2-hydroxy-6-oxononatrienedioate hydrolase.